A 771-amino-acid polypeptide reads, in one-letter code: Rho GTPase-activating protein 26 (771 aa).

In terms of domain architecture, BAR spans 7-262 (EFSDCYLDSP…MKENPHEHLA (256 aa)). Residues 265-369 (PFTMEGYLYV…WMEAMDGREP (105 aa)) form the PH domain. One can recognise a Rho-GAP domain in the interval 383–568 (AQLDNIGFSI…IIIENYEEMF (186 aa)). Residues 575 to 712 (PQTNSQLHLS…SSTSSDSSPV (138 aa)) form a disordered region. The span at 608 to 617 (HSSEKEEKRN) shows a compositional bias: basic and acidic residues. Low complexity predominate over residues 618–637 (SVNSSAESVSSSNANSSVNS). 2 stretches are compositionally biased toward polar residues: residues 638 to 650 (TCTQ…NLNA) and 662 to 671 (RPNSLLNPKN). Composition is skewed to low complexity over residues 673 to 683 (SGLLPSSLNPS) and 691 to 712 (PMVS…SSPV). The region spanning 713–771 (SVPRKAKALYACKAEHDSELSFSAGTVFENVCPSQEPGWLEGTLNGKTGLIPENYVEFL) is the SH3 domain.

The protein resides in the cell junction. It is found in the focal adhesion. Its subcellular location is the cytoplasm. The protein localises to the cytoskeleton. It localises to the endosome membrane. Functionally, GTPase-activating protein for rhoa and cdc42. May be involved in the regulation of neosynthesized protein export through a Rab-endososomal dependent export route. The polypeptide is Rho GTPase-activating protein 26 (arhgap26) (Xenopus laevis (African clawed frog)).